Consider the following 21-residue polypeptide: Glucose-1-phosphate adenylyltransferase large subunit (21 aa).

The interval 1 to 21 (SVTADNASETKVREIGQEKSS) is disordered. A compositionally biased stretch (basic and acidic residues) spans 8 to 21 (SETKVREIGQEKSS).

The protein belongs to the bacterial/plant glucose-1-phosphate adenylyltransferase family. Heterotetramer.

It is found in the plastid. It localises to the chloroplast. Its subcellular location is the amyloplast. It catalyses the reaction alpha-D-glucose 1-phosphate + ATP + H(+) = ADP-alpha-D-glucose + diphosphate. Its pathway is glycan biosynthesis; starch biosynthesis. Activated by 3'phosphoglycerate, inhibited by orthophosphate. Allosteric regulation. In terms of biological role, this protein plays a role in synthesis of starch. It catalyzes the synthesis of the activated glycosyl donor, ADP-glucose from Glc-1-P and ATP. The protein is Glucose-1-phosphate adenylyltransferase large subunit of Spinacia oleracea (Spinach).